A 213-amino-acid polypeptide reads, in one-letter code: Probable septum site-determining protein MinC (213 aa).

Belongs to the MinC family. As to quaternary structure, interacts with MinD and FtsZ.

In terms of biological role, cell division inhibitor that blocks the formation of polar Z ring septums. Rapidly oscillates between the poles of the cell to destabilize FtsZ filaments that have formed before they mature into polar Z rings. Prevents FtsZ polymerization. The protein is Probable septum site-determining protein MinC of Clostridium botulinum (strain Eklund 17B / Type B).